The chain runs to 338 residues: Aspartate carbamoyltransferase catalytic subunit (338 aa).

2 residues coordinate carbamoyl phosphate: R72 and T73. Position 100 (K100) interacts with L-aspartate. Residues R122, H152, and Q155 each coordinate carbamoyl phosphate. L-aspartate-binding residues include R186 and R243. The carbamoyl phosphate site is built by G284 and P285.

The protein belongs to the aspartate/ornithine carbamoyltransferase superfamily. ATCase family. As to quaternary structure, heterododecamer (2C3:3R2) of six catalytic PyrB chains organized as two trimers (C3), and six regulatory PyrI chains organized as three dimers (R2).

It carries out the reaction carbamoyl phosphate + L-aspartate = N-carbamoyl-L-aspartate + phosphate + H(+). It participates in pyrimidine metabolism; UMP biosynthesis via de novo pathway; (S)-dihydroorotate from bicarbonate: step 2/3. Its function is as follows. Catalyzes the condensation of carbamoyl phosphate and aspartate to form carbamoyl aspartate and inorganic phosphate, the committed step in the de novo pyrimidine nucleotide biosynthesis pathway. The polypeptide is Aspartate carbamoyltransferase catalytic subunit (Acinetobacter baumannii (strain SDF)).